Reading from the N-terminus, the 876-residue chain is Valine--tRNA ligase (876 aa).

Positions 43 to 53 (PNVTGVLHMGH) match the 'HIGH' region motif. The 'KMSKS' region motif lies at 532 to 536 (KMSKS). K535 serves as a coordination point for ATP. Coiled-coil stretches lie at residues 805–826 (GNMIDVDAEIARMEAELKHKEG) and 853–875 (RKKQADAESIIQSLKESIASLKN).

This sequence belongs to the class-I aminoacyl-tRNA synthetase family. ValS type 1 subfamily. Monomer.

The protein resides in the cytoplasm. It catalyses the reaction tRNA(Val) + L-valine + ATP = L-valyl-tRNA(Val) + AMP + diphosphate. Its function is as follows. Catalyzes the attachment of valine to tRNA(Val). As ValRS can inadvertently accommodate and process structurally similar amino acids such as threonine, to avoid such errors, it has a 'posttransfer' editing activity that hydrolyzes mischarged Thr-tRNA(Val) in a tRNA-dependent manner. The protein is Valine--tRNA ligase of Bacteroides fragilis (strain ATCC 25285 / DSM 2151 / CCUG 4856 / JCM 11019 / LMG 10263 / NCTC 9343 / Onslow / VPI 2553 / EN-2).